A 334-amino-acid polypeptide reads, in one-letter code: Protein U17/U16 (334 aa).

The protein belongs to the herpesviridae US22 family.

Functionally, isoform 3 can transactivate the human immunodeficiency virus type 1 promoter. The protein is Protein U17/U16 (U17/U16) of Human herpesvirus 6A (strain Uganda-1102) (HHV-6 variant A).